The chain runs to 255 residues: F-box/SPRY domain-containing protein 1 (255 aa).

Residues 3-51 enclose the F-box domain; sequence DPVAALCNYNVLEVIFSYLELEDLNHCSQVCKSWYHFLNDENSDVWRWH. The region spanning 61–253 is the B30.2/SPRY domain; the sequence is LKSDLLASVS…VSMVYLGTPL (193 aa).

It belongs to the FBXO45/Fsn family. As to quaternary structure, component of an E3 ubiquitin ligase complex composed of hiw and Fsn.

Its subcellular location is the synapse. The protein operates within protein modification; protein ubiquitination. Its function is as follows. Required in the presynaptic motoneuron to down-regulate the levels of wnd and restrain synaptic terminal growth at the neuromuscular junction (NMJ). The polypeptide is F-box/SPRY domain-containing protein 1 (Drosophila yakuba (Fruit fly)).